The sequence spans 318 residues: HPr kinase/phosphorylase (318 aa).

Active-site residues include H143 and K164. 158–165 (GKSGVGKS) lines the ATP pocket. S165 contributes to the Mg(2+) binding site. D182 acts as the Proton acceptor; for phosphorylation activity. Proton donor; for dephosphorylation activity in catalysis. The interval 206–215 (MEIRGLGILN) is important for the catalytic mechanism of both phosphorylation and dephosphorylation. E207 is a Mg(2+) binding site. R248 is an active-site residue. Residues 269–274 (PVKPGR) form an important for the catalytic mechanism of dephosphorylation region.

The protein belongs to the HPrK/P family. In terms of assembly, homohexamer. The cofactor is Mg(2+).

The catalysed reaction is [HPr protein]-L-serine + ATP = [HPr protein]-O-phospho-L-serine + ADP + H(+). It carries out the reaction [HPr protein]-O-phospho-L-serine + phosphate + H(+) = [HPr protein]-L-serine + diphosphate. Catalyzes the ATP- as well as the pyrophosphate-dependent phosphorylation of a specific serine residue in HPr, a phosphocarrier protein of the phosphoenolpyruvate-dependent sugar phosphotransferase system (PTS). HprK/P also catalyzes the pyrophosphate-producing, inorganic phosphate-dependent dephosphorylation (phosphorolysis) of seryl-phosphorylated HPr (P-Ser-HPr). The protein is HPr kinase/phosphorylase of Leptospira borgpetersenii serovar Hardjo-bovis (strain L550).